The following is a 260-amino-acid chain: MTYTSPRRPQLFYTTAPMPCPYVAGRMERKVVTDIGGPDAERLHNRLSRAGFRRSHTIAYAPVCPSCSACVPIRVPVASFSPDRTQRRTLRRNATIEGFEVPAHATTEQFTLFQRYQFARHAEGDMAAMNFYDYRAMIEDTPIDTMMIEFRTPEDRLVCVSLIDRLDDGLSAVYSFFDPTMDARSLGSYAIMHLIAHTRRLGLPYLYLGYWIRDSAKMAYKARFQPAEILFHGAWTPLDRDRLPEEGDRGPARFPASLTE.

Positions 241-251 are enriched in basic and acidic residues; that stretch reads DRLPEEGDRGP. The tract at residues 241–260 is disordered; it reads DRLPEEGDRGPARFPASLTE.

Belongs to the R-transferase family. Bpt subfamily.

The protein resides in the cytoplasm. The enzyme catalyses N-terminal L-glutamyl-[protein] + L-leucyl-tRNA(Leu) = N-terminal L-leucyl-L-glutamyl-[protein] + tRNA(Leu) + H(+). The catalysed reaction is N-terminal L-aspartyl-[protein] + L-leucyl-tRNA(Leu) = N-terminal L-leucyl-L-aspartyl-[protein] + tRNA(Leu) + H(+). Functions in the N-end rule pathway of protein degradation where it conjugates Leu from its aminoacyl-tRNA to the N-termini of proteins containing an N-terminal aspartate or glutamate. The protein is Aspartate/glutamate leucyltransferase of Gluconacetobacter diazotrophicus (strain ATCC 49037 / DSM 5601 / CCUG 37298 / CIP 103539 / LMG 7603 / PAl5).